We begin with the raw amino-acid sequence, 115 residues long: Ribosome-binding factor A (115 aa).

The protein belongs to the RbfA family. In terms of assembly, monomer. Binds 30S ribosomal subunits, but not 50S ribosomal subunits or 70S ribosomes.

It is found in the cytoplasm. In terms of biological role, one of several proteins that assist in the late maturation steps of the functional core of the 30S ribosomal subunit. Associates with free 30S ribosomal subunits (but not with 30S subunits that are part of 70S ribosomes or polysomes). Required for efficient processing of 16S rRNA. May interact with the 5'-terminal helix region of 16S rRNA. This chain is Ribosome-binding factor A, found in Bacillus velezensis (strain DSM 23117 / BGSC 10A6 / LMG 26770 / FZB42) (Bacillus amyloliquefaciens subsp. plantarum).